We begin with the raw amino-acid sequence, 92 residues long: Small ribosomal subunit protein uS19 (92 aa).

This sequence belongs to the universal ribosomal protein uS19 family.

Its function is as follows. Protein S19 forms a complex with S13 that binds strongly to the 16S ribosomal RNA. The sequence is that of Small ribosomal subunit protein uS19 from Photorhabdus laumondii subsp. laumondii (strain DSM 15139 / CIP 105565 / TT01) (Photorhabdus luminescens subsp. laumondii).